A 221-amino-acid polypeptide reads, in one-letter code: NAD(P)H-hydrate epimerase (221 aa).

A YjeF N-terminal domain is found at 9–219 (MRELETAAVK…NIGLPKELLS (211 aa)). 60 to 64 (GNGGD) contributes to the (6S)-NADPHX binding site. K(+) contacts are provided by Asn61 and Asp131. Residues 135-141 (GIGFKGE), Tyr146, and Asp164 contribute to the (6S)-NADPHX site. Ser167 contributes to the K(+) binding site.

It belongs to the NnrE/AIBP family. Requires K(+) as cofactor.

It carries out the reaction (6R)-NADHX = (6S)-NADHX. The enzyme catalyses (6R)-NADPHX = (6S)-NADPHX. Catalyzes the epimerization of the S- and R-forms of NAD(P)HX, a damaged form of NAD(P)H that is a result of enzymatic or heat-dependent hydration. This is a prerequisite for the S-specific NAD(P)H-hydrate dehydratase to allow the repair of both epimers of NAD(P)HX. This Elusimicrobium minutum (strain Pei191) protein is NAD(P)H-hydrate epimerase.